The chain runs to 129 residues: uncharacterized protein (129 aa).

The first 17 residues, methionine 1 to alanine 17, serve as a signal peptide directing secretion. Residues serine 26–serine 36 are compositionally biased toward low complexity. Residues serine 26 to arginine 76 form a disordered region.

This is an uncharacterized protein from Escherichia coli O157:H7.